The following is a 260-amino-acid chain: Ubiquinone/menaquinone biosynthesis C-methyltransferase UbiE (260 aa).

Residues Thr83, Asp104, and 132-133 each bind S-adenosyl-L-methionine; that span reads NA.

Belongs to the class I-like SAM-binding methyltransferase superfamily. MenG/UbiE family.

It catalyses the reaction a 2-demethylmenaquinol + S-adenosyl-L-methionine = a menaquinol + S-adenosyl-L-homocysteine + H(+). It carries out the reaction a 2-methoxy-6-(all-trans-polyprenyl)benzene-1,4-diol + S-adenosyl-L-methionine = a 5-methoxy-2-methyl-3-(all-trans-polyprenyl)benzene-1,4-diol + S-adenosyl-L-homocysteine + H(+). It functions in the pathway quinol/quinone metabolism; menaquinone biosynthesis; menaquinol from 1,4-dihydroxy-2-naphthoate: step 2/2. The protein operates within cofactor biosynthesis; ubiquinone biosynthesis. Its function is as follows. Methyltransferase required for the conversion of demethylmenaquinol (DMKH2) to menaquinol (MKH2) and the conversion of 2-polyprenyl-6-methoxy-1,4-benzoquinol (DDMQH2) to 2-polyprenyl-3-methyl-6-methoxy-1,4-benzoquinol (DMQH2). This chain is Ubiquinone/menaquinone biosynthesis C-methyltransferase UbiE, found in Bartonella quintana (strain Toulouse) (Rochalimaea quintana).